The chain runs to 585 residues: Arginine--tRNA ligase (585 aa).

A 'HIGH' region motif is present at residues 131–141; the sequence is ANPTGPMHVGH.

The protein belongs to the class-I aminoacyl-tRNA synthetase family. As to quaternary structure, monomer.

It is found in the cytoplasm. It catalyses the reaction tRNA(Arg) + L-arginine + ATP = L-arginyl-tRNA(Arg) + AMP + diphosphate. The chain is Arginine--tRNA ligase from Rhizobium leguminosarum bv. trifolii (strain WSM2304).